Reading from the N-terminus, the 488-residue chain is ATP-dependent RNA helicase dbp3 (488 aa).

The segment covering 1 to 29 (MAKREHQDQTGDSRPSKKSKGTKDTKKNT) has biased composition (basic and acidic residues). Positions 1-42 (MAKREHQDQTGDSRPSKKSKGTKDTKKNTEVSPPYFQSPALD) are disordered. The Q motif signature appears at 92 to 100 (GFASPTAIQ). The region spanning 104-279 (WPLLFAGRDV…STFMTSPVTV (176 aa)) is the Helicase ATP-binding domain. ATP is bound at residue 117 to 124 (AETGSGKT). The DEAD box motif lies at 226–229 (DEAD). Residues 306–457 (EKEQRLVQIL…EVPEALLKFG (152 aa)) form the Helicase C-terminal domain.

This sequence belongs to the DEAD box helicase family. DDX5/DBP2 subfamily.

It is found in the nucleus. The protein localises to the nucleolus. It carries out the reaction ATP + H2O = ADP + phosphate + H(+). Functionally, ATP-dependent RNA helicase required for 60S ribosomal subunit synthesis. Involved in efficient pre-rRNA processing, predominantly at site A3, which is necessary for the normal formation of 25S and 5.8S rRNAs. This is ATP-dependent RNA helicase dbp3 (dbp3) from Emericella nidulans (strain FGSC A4 / ATCC 38163 / CBS 112.46 / NRRL 194 / M139) (Aspergillus nidulans).